A 308-amino-acid polypeptide reads, in one-letter code: Porphobilinogen deaminase (308 aa).

S-(dipyrrolylmethanemethyl)cysteine is present on C240.

Belongs to the HMBS family. In terms of assembly, monomer. It depends on dipyrromethane as a cofactor.

It carries out the reaction 4 porphobilinogen + H2O = hydroxymethylbilane + 4 NH4(+). It participates in porphyrin-containing compound metabolism; protoporphyrin-IX biosynthesis; coproporphyrinogen-III from 5-aminolevulinate: step 2/4. Functionally, tetrapolymerization of the monopyrrole PBG into the hydroxymethylbilane pre-uroporphyrinogen in several discrete steps. This chain is Porphobilinogen deaminase, found in Maridesulfovibrio salexigens (strain ATCC 14822 / DSM 2638 / NCIMB 8403 / VKM B-1763) (Desulfovibrio salexigens).